Consider the following 71-residue polypeptide: Large ribosomal subunit protein uL29 (71 aa).

The protein belongs to the universal ribosomal protein uL29 family.

This Rickettsia akari (strain Hartford) protein is Large ribosomal subunit protein uL29.